We begin with the raw amino-acid sequence, 396 residues long: Ribosomal RNA large subunit methyltransferase I (396 aa).

A PUA domain is found at 2-81 (SVRLVLAKGR…ESIDIAFFSR (80 aa)).

The protein belongs to the methyltransferase superfamily. RlmI family.

The protein localises to the cytoplasm. It catalyses the reaction cytidine(1962) in 23S rRNA + S-adenosyl-L-methionine = 5-methylcytidine(1962) in 23S rRNA + S-adenosyl-L-homocysteine + H(+). Specifically methylates the cytosine at position 1962 (m5C1962) of 23S rRNA. This chain is Ribosomal RNA large subunit methyltransferase I, found in Shigella boydii serotype 18 (strain CDC 3083-94 / BS512).